The chain runs to 241 residues: ATP synthase subunit a (241 aa).

Transmembrane regions (helical) follow at residues 29–49 (NSSF…LFGI), 54–74 (VIPG…ISII), 86–106 (IPLI…GVLP), 114–134 (HVIV…IVGF), 153–173 (WLAP…PVSL), 177–197 (LAAN…FIVN), 200–220 (IFFT…EVFV), and 221–241 (AILQ…DAVK).

Belongs to the ATPase A chain family. As to quaternary structure, F-type ATPases have 2 components, CF(1) - the catalytic core - and CF(0) - the membrane proton channel. CF(1) has five subunits: alpha(3), beta(3), gamma(1), delta(1), epsilon(1). CF(0) has three main subunits: a(1), b(2) and c(9-12). The alpha and beta chains form an alternating ring which encloses part of the gamma chain. CF(1) is attached to CF(0) by a central stalk formed by the gamma and epsilon chains, while a peripheral stalk is formed by the delta and b chains.

The protein resides in the cell membrane. Its function is as follows. Key component of the proton channel; it plays a direct role in the translocation of protons across the membrane. The chain is ATP synthase subunit a from Wolbachia pipientis wMel.